Consider the following 222-residue polypeptide: Transmembrane reductase CYB561D2 (222 aa).

The Cytoplasmic segment spans residues alanine 2–threonine 17. In terms of domain architecture, Cytochrome b561 spans alanine 14 to arginine 217. A helical membrane pass occupies residues valine 18–alanine 38. The Lumenal segment spans residues arginine 39–serine 46. A helical transmembrane segment spans residues tryptophan 47–phenylalanine 67. Histidine 48 is a binding site for heme b. The Cytoplasmic portion of the chain corresponds to serine 68–cysteine 85. Heme b contacts are provided by histidine 86 and histidine 120. Residues histidine 86–leucine 106 traverse the membrane as a helical segment. The Lumenal segment spans residues histidine 107–arginine 122. The helical transmembrane segment at alanine 123–tyrosine 143 threads the bilayer. Over proline 144–serine 162 the chain is Cytoplasmic. Histidine 159 is a heme b binding site. Residues glycine 163–phenylalanine 183 form a helical membrane-spanning segment. Residues threonine 184 to threonine 186 are Lumenal-facing. A helical transmembrane segment spans residues valine 187 to methionine 207. Residues asparagine 208–proline 222 are Cytoplasmic-facing.

Heme b serves as cofactor.

The protein resides in the endoplasmic reticulum membrane. Its subcellular location is the cytoplasmic vesicle membrane. The catalysed reaction is monodehydro-L-ascorbate radical(out) + L-ascorbate(in) = monodehydro-L-ascorbate radical(in) + L-ascorbate(out). It catalyses the reaction Fe(3+)(out) + L-ascorbate(in) = monodehydro-L-ascorbate radical(in) + Fe(2+)(out) + H(+). Functionally, transmembrane reductase that may use ascorbate as an electron donor in the cytoplasm and transfer electrons across endoplasmic reticulum membranes to reduce monodehydro-L-ascorbate radical and iron cations Fe(3+) in the lumen of that compartment. This is Transmembrane reductase CYB561D2 from Bos taurus (Bovine).